Reading from the N-terminus, the 222-residue chain is MIETILPAGVESAELLEYPEDLKAHPAEEHLIAKSVEKRRRDFIGARHCARLALAELGEPPVAIGKGERGAPIWPRGVVGSLTHCDGYRAAAVAHKMRFRSIGIDAEPHATLPEGVLDSVSLPPEREWLKTTDSALHLDRLLFCAKEATYKAWWPLTARWLGFEEAHITFEIEDGSADSGNGTFHSELLVPGQTNDGGTPLLSFDGRWLIADGFILTAIAYA.

Residues D105, E107, and E147 each contribute to the Mg(2+) site.

It belongs to the P-Pant transferase superfamily. Monomer. Mg(2+) serves as cofactor.

The enzyme catalyses apo-[ACP] + CoA = holo-[ACP] + adenosine 3',5'-bisphosphate + H(+). Its function is as follows. Catalyzes the transfer of the 4'-phosphopantetheine moiety from coenzyme A to a serine residue in the acyl-carrier domain of carboxylic acid reductase Car, thus converting apo-Car to fully active holo-Car. Is probably also responsible for the activation of other proteins with phosphopantetheine attachment sites. This chain is 4'-phosphopantetheinyl transferase Npt (npt), found in Nocardia iowensis.